Here is a 67-residue protein sequence, read N- to C-terminus: Large ribosomal subunit protein uL29 (67 aa).

It belongs to the universal ribosomal protein uL29 family.

The protein is Large ribosomal subunit protein uL29 of Halorhodospira halophila (strain DSM 244 / SL1) (Ectothiorhodospira halophila (strain DSM 244 / SL1)).